Reading from the N-terminus, the 234-residue chain is Transcription factor ILR3 (234 aa).

The tract at residues 34-85 is disordered; sequence QPIGVSSNSSAGVDGSAGNSEASKEPGSKKRGRCESSSATSSKACREKQRRD. Over residues 36–54 the composition is skewed to polar residues; the sequence is IGVSSNSSAGVDGSAGNSE. Positions 71 to 122 constitute a bHLH domain; the sequence is SATSSKACREKQRRDRLNDKFMELGAILEPGNPPKTDKAAILVDAVRMVTQL.

Homodimer. Interacts with BTS and BHLH47/PYE. Widely expressed throughout development, mostly in vasculatures.

It is found in the nucleus. Its function is as follows. Transcription factor. Plays a role in resistance to amide-linked indole-3-acetic acid (IAA) conjugates such as IAA-Leu and IAA-Phe. May regulate gene expression in response to metal homeostasis changes. The sequence is that of Transcription factor ILR3 (ILR3) from Arabidopsis thaliana (Mouse-ear cress).